The primary structure comprises 622 residues: uncharacterized protein (622 aa).

Over residues 157–166 (LKESPLRDQQ) the composition is skewed to basic and acidic residues. The tract at residues 157-238 (LKESPLRDQQ…GLPDHNSISE (82 aa)) is disordered.

This is an uncharacterized protein from Homo sapiens (Human).